A 218-amino-acid chain; its full sequence is Small ribosomal subunit protein uS3 (218 aa).

One can recognise a KH type-2 domain in the interval 38 to 106 (IREFISKRLS…RVHINILEIK (69 aa)).

This sequence belongs to the universal ribosomal protein uS3 family. Part of the 30S ribosomal subunit. Forms a tight complex with proteins S10 and S14.

Functionally, binds the lower part of the 30S subunit head. Binds mRNA in the 70S ribosome, positioning it for translation. The sequence is that of Small ribosomal subunit protein uS3 from Bacillus pumilus (strain SAFR-032).